Here is a 121-residue protein sequence, read N- to C-terminus: Acidic phospholipase A2 PLA-2 (121 aa).

Intrachain disulfides connect Cys26/Cys115, Cys28/Cys44, Cys43/Cys95, Cys49/Cys121, Cys50/Cys88, Cys57/Cys81, and Cys75/Cys86. Tyr27, Gly29, and Gly31 together coordinate Ca(2+). The active site involves His47. Asp48 is a Ca(2+) binding site. Asp89 is an active-site residue.

Belongs to the phospholipase A2 family. Group II subfamily. D49 sub-subfamily. Ca(2+) is required as a cofactor. In terms of tissue distribution, expressed by the venom gland.

Its subcellular location is the secreted. It carries out the reaction a 1,2-diacyl-sn-glycero-3-phosphocholine + H2O = a 1-acyl-sn-glycero-3-phosphocholine + a fatty acid + H(+). PLA2 catalyzes the calcium-dependent hydrolysis of the 2-acyl groups in 3-sn-phosphoglycerides. The protein is Acidic phospholipase A2 PLA-2 of Eristicophis macmahoni (Leaf-nosed viper).